Consider the following 409-residue polypeptide: Lipoyl synthase, mitochondrial (409 aa).

Positions 21 to 41 (QQQVPPSEEPRNESGAANPPL) are disordered. 7 residues coordinate [4Fe-4S] cluster: Cys-125, Cys-130, Cys-136, Cys-159, Cys-163, Cys-166, and Ser-375. The Radical SAM core domain maps to 142-364 (EEGDGTATAT…EKEALDMGFL (223 aa)).

Belongs to the radical SAM superfamily. Lipoyl synthase family. [4Fe-4S] cluster is required as a cofactor.

The protein localises to the mitochondrion. It catalyses the reaction [[Fe-S] cluster scaffold protein carrying a second [4Fe-4S](2+) cluster] + N(6)-octanoyl-L-lysyl-[protein] + 2 oxidized [2Fe-2S]-[ferredoxin] + 2 S-adenosyl-L-methionine + 4 H(+) = [[Fe-S] cluster scaffold protein] + N(6)-[(R)-dihydrolipoyl]-L-lysyl-[protein] + 4 Fe(3+) + 2 hydrogen sulfide + 2 5'-deoxyadenosine + 2 L-methionine + 2 reduced [2Fe-2S]-[ferredoxin]. The protein operates within protein modification; protein lipoylation via endogenous pathway; protein N(6)-(lipoyl)lysine from octanoyl-[acyl-carrier-protein]: step 2/2. Functionally, catalyzes the radical-mediated insertion of two sulfur atoms into the C-6 and C-8 positions of the octanoyl moiety bound to the lipoyl domains of lipoate-dependent enzymes, thereby converting the octanoylated domains into lipoylated derivatives. In Trypanosoma brucei gambiense (strain MHOM/CI/86/DAL972), this protein is Lipoyl synthase, mitochondrial.